The chain runs to 268 residues: D-alanyl-D-alanine carboxypeptidase (268 aa).

The helical transmembrane segment at 25–47 (AFLWAFIISFTVCTLFLGWRLVS) threads the bilayer. Substrate contacts are provided by residues Q151, 179 to 181 (WVA), and S186. 2 residues coordinate Zn(2+): H188 and D195. Catalysis depends on E238, which acts as the Proton donor/acceptor. Residue H241 coordinates Zn(2+).

The protein belongs to the peptidase M15B family. As to quaternary structure, monomer. Requires Zn(2+) as cofactor.

Its subcellular location is the cell membrane. With respect to regulation, carboxypeptidase activity is insensitive to beta-lactams since it is not affected by penicillin G or ampicillin and is inhibited only by very high concentrations of cefalotin and cefoxitin. Functionally, carboxypeptidase that cleaves the C-terminal D-alanine residue from the peptidoglycan-derived pentapeptide L-Ala-gamma-D-Glu-L-Lys-D-Ala-D-Ala in vitro. Therefore, should contribute in vivo to the hydrolysis of the D-alanyl-D-alanine-containing peptidoglycan precursors. May increase the level of glycopeptide antibiotics resistance by decreasing the availability of D-Ala-D-Ala termini from the cell surface, which constitute the antibiotic target residues. The protein is D-alanyl-D-alanine carboxypeptidase of Enterococcus faecalis (strain ATCC 700802 / V583).